Here is a 154-residue protein sequence, read N- to C-terminus: Protein X (154 aa).

A mitochondrial targeting sequence region spans residues 68–117; the sequence is PCALRFTSARRMETTVNAHGNLPKVLHKRTLGLSAMSTTDLEAYFKDCVF.

The protein belongs to the orthohepadnavirus protein X family. As to quaternary structure, may form homodimer. May interact with host CEBPA, CFLAR, CREB1, DDB1, E4F1, HBXIP, HSPD1/HSP60, NFKBIA, POLR2E and SMAD4. Interacts with host SMC5-SMC6 complex and induces its degradation. Interacts with host TRPC4AP; leading to prevent ubiquitination of TRPC4AP. Interacts with host PLSCR1; this interaction promotes ubiquitination and degradation of HBx and impairs HBx-mediated cell proliferation. In terms of processing, a fraction may be phosphorylated in insect cells and HepG2 cells, a human hepatoblastoma cell line. Phosphorylated in vitro by host protein kinase C or mitogen-activated protein kinase. N-acetylated in insect cells.

The protein resides in the host cytoplasm. It localises to the host nucleus. Its subcellular location is the host mitochondrion. Multifunctional protein that plays a role in silencing host antiviral defenses and promoting viral transcription. Does not seem to be essential for HBV infection. May be directly involved in development of cirrhosis and liver cancer (hepatocellular carcinoma). Most of cytosolic activities involve modulation of cytosolic calcium. The effect on apoptosis is controversial depending on the cell types in which the studies have been conducted. May induce apoptosis by localizing in mitochondria and causing loss of mitochondrial membrane potential. May also modulate apoptosis by binding host CFLAR, a key regulator of the death-inducing signaling complex (DISC). Promotes viral transcription by using the host E3 ubiquitin ligase DDB1 to target the SMC5-SMC6 complex to proteasomal degradation. This host complex would otherwise bind to viral episomal DNA, and prevents its transcription. Moderately stimulates transcription of many different viral and cellular transcription elements. Promoters and enhancers stimulated by HBx contain DNA binding sites for NF-kappa-B, AP-1, AP-2, c-EBP, ATF/CREB, or the calcium-activated factor NF-AT. This is Protein X from Hepatitis B virus genotype B/C subtype adw (isolate Okinawa/pODW282/1998) (HBV-B).